We begin with the raw amino-acid sequence, 201 residues long: Ciliary microtubule inner protein 2C (201 aa).

This sequence belongs to the CIMIP2 family. As to quaternary structure, microtubule inner protein component of sperm flagellar doublet microtubules. In terms of tissue distribution, expressed in airway epithelial cells.

The protein resides in the cytoplasm. It localises to the cytoskeleton. Its subcellular location is the cilium axoneme. The protein localises to the flagellum axoneme. Microtubule inner protein (MIP) part of the dynein-decorated doublet microtubules (DMTs) in cilia axoneme, which is required for motile cilia beating. Binds to the intra-tubulin interfaces. This chain is Ciliary microtubule inner protein 2C, found in Homo sapiens (Human).